A 311-amino-acid polypeptide reads, in one-letter code: Thioredoxin reductase (311 aa).

35–42 lines the FAD pocket; the sequence is ERGIPGGQ. Cys134 and Cys137 are joined by a disulfide. FAD is bound at residue 277-286; sequence DVRDKGLRQI.

The protein belongs to the class-II pyridine nucleotide-disulfide oxidoreductase family. As to quaternary structure, homodimer. FAD is required as a cofactor.

The protein localises to the cytoplasm. It carries out the reaction [thioredoxin]-dithiol + NADP(+) = [thioredoxin]-disulfide + NADPH + H(+). This chain is Thioredoxin reductase (trxB), found in Staphylococcus aureus (strain MRSA252).